The following is a 521-amino-acid chain: DNA damage-binding protein cmr1 (521 aa).

Residues 36 to 75 form a disordered region; the sequence is DKIIPKPAPPKPKRASTPRVKREPVKKEAARPTRQSSRLA. The segment covering 55–66 has biased composition (basic and acidic residues); that stretch reads VKREPVKKEAAR. WD repeat units lie at residues 183–224, 242–282, 333–373, 382–422, and 490–521; these read IVPQ…PKIE, THSR…STEI, LTDH…GKGD, EHES…EWKA, and DGIT…CLWM.

This sequence belongs to the WD repeat DDB2/WDR76 family.

Functionally, DNA-binding protein that binds to both single- and double-stranded DNA. Binds preferentially to UV-damaged DNA. May be involved in DNA-metabolic processes. This Neurospora crassa (strain ATCC 24698 / 74-OR23-1A / CBS 708.71 / DSM 1257 / FGSC 987) protein is DNA damage-binding protein cmr1.